Consider the following 154-residue polypeptide: Metallothiol transferase FosB (154 aa).

The region spanning 8–123 (GINHLLFSVS…DGHKFELHTG (116 aa)) is the VOC domain. Positions 11, 70, and 119 each coordinate Mg(2+). Glu119 (proton donor/acceptor) is an active-site residue.

This sequence belongs to the fosfomycin resistance protein family. FosB subfamily. As to quaternary structure, homodimer. Mg(2+) serves as cofactor.

It localises to the cytoplasm. Metallothiol transferase which confers resistance to fosfomycin by catalyzing the addition of a thiol cofactor to fosfomycin. L-cysteine is probably the physiological thiol donor. In Bacillus licheniformis (strain ATCC 14580 / DSM 13 / JCM 2505 / CCUG 7422 / NBRC 12200 / NCIMB 9375 / NCTC 10341 / NRRL NRS-1264 / Gibson 46), this protein is Metallothiol transferase FosB.